The following is an 815-amino-acid chain: Protein-glutamine gamma-glutamyltransferase K (815 aa).

2 disordered regions span residues 1–40 (MDGP…RRGG) and 59–100 (DDWG…AAGD). Residues 16–25 (WQPPTTPSPE) are compositionally biased toward pro residues. T21 is modified (phosphothreonine). Phosphoserine is present on residues S23, S80, S83, S90, and S93. The span at 59-87 (DDWGPEPHRDRGSGSGRRRPDSRGSDSRR) shows a compositional bias: basic and acidic residues. Active-site residues include C375, H434, and D457. Residues N497, D499, E546, and E551 each coordinate Ca(2+). Residues 795–815 (SNAGGNSPLGETIPMASRGGA) are disordered.

This sequence belongs to the transglutaminase superfamily. Transglutaminase family. As to quaternary structure, interacts with PLAAT4. Requires Ca(2+) as cofactor. Post-translationally, palmitoylated. In terms of processing, the membrane anchorage region possesses a cluster of five cysteines within which fatty acid(s) may become thioester-linked. It is subject to phorbol ester-stimulated phosphorylation and is hypersensitive to proteolysis, which releases the enzyme in a soluble form. Tyrosine-phosphorylated.

The protein resides in the membrane. It carries out the reaction L-glutaminyl-[protein] + L-lysyl-[protein] = [protein]-L-lysyl-N(6)-5-L-glutamyl-[protein] + NH4(+). Functionally, catalyzes the cross-linking of proteins and the conjugation of polyamines to proteins. Responsible for cross-linking epidermal proteins during formation of the stratum corneum. Involved in cell proliferation. This chain is Protein-glutamine gamma-glutamyltransferase K (TGM1), found in Canis lupus familiaris (Dog).